We begin with the raw amino-acid sequence, 312 residues long: Sulfate adenylyltransferase subunit 2 (312 aa).

This sequence belongs to the PAPS reductase family. CysD subfamily. Heterodimer composed of CysD, the smaller subunit, and CysN.

The enzyme catalyses sulfate + ATP + H(+) = adenosine 5'-phosphosulfate + diphosphate. The protein operates within sulfur metabolism; hydrogen sulfide biosynthesis; sulfite from sulfate: step 1/3. Functionally, with CysN forms the ATP sulfurylase (ATPS) that catalyzes the adenylation of sulfate producing adenosine 5'-phosphosulfate (APS) and diphosphate, the first enzymatic step in sulfur assimilation pathway. APS synthesis involves the formation of a high-energy phosphoric-sulfuric acid anhydride bond driven by GTP hydrolysis by CysN coupled to ATP hydrolysis by CysD. This is Sulfate adenylyltransferase subunit 2 from Methylobacterium nodulans (strain LMG 21967 / CNCM I-2342 / ORS 2060).